Reading from the N-terminus, the 182-residue chain is Transcription termination/antitermination protein NusG (182 aa).

This sequence belongs to the NusG family.

Functionally, participates in transcription elongation, termination and antitermination. In Chlamydia pneumoniae (Chlamydophila pneumoniae), this protein is Transcription termination/antitermination protein NusG.